The sequence spans 359 residues: MAAVAGLVRGPLRQASGLLKRRFHRSAPAAVQLTVREAINQGMDEELERDEKVFLLGEEVAQYDGAYKVSRGLWKKYGDKRIIDTPISEMGFAGIAVGAAMAGLRPICEFMTFNFSMQAIDQVINSAAKTYYMSAGLQPVPIVFRGPNGASAGVAAQHSQCFAAWYGHCPGLKVVSPWNSEDAKGLIKSAIRDDNPVVMLENELMYGVAFELPTEAQSKDFLIPIGKAKIERQGTHITVVAHSRPVGHCLEAAAVLSKEGIECEVINLRTIRPMDIEAIEASVMKTNHLVTVEGGWPQFGVGAEICARIMEGPAFNFLDAPAVRVTGADVPMPYAKILEDNSIPQVKDIIFAIKKTLNI.

The N-terminal 30 residues, 1-30 (MAAVAGLVRGPLRQASGLLKRRFHRSAPAA), are a transit peptide targeting the mitochondrion. Position 67 is a phosphotyrosine (Tyr-67). Glu-89 contributes to the thiamine diphosphate binding site. Residues Ile-142, Ala-190, Ile-191, Asp-193, and Asn-195 each contribute to the K(+) site. Lys-354 is subject to N6-acetyllysine.

Heterotetramer of two PDHA1 and two PDHB subunits. The heterotetramer interacts with DLAT, and is part of the multimeric pyruvate dehydrogenase complex that contains multiple copies of pyruvate dehydrogenase (E1), dihydrolipoamide acetyltransferase (DLAT, E2) and lipoamide dehydrogenase (DLD, E3). These subunits are bound to an inner core composed of about 48 DLAT and 12 PDHX molecules. Interacts with DLAT. Thiamine diphosphate is required as a cofactor.

Its subcellular location is the mitochondrion matrix. It carries out the reaction N(6)-[(R)-lipoyl]-L-lysyl-[protein] + pyruvate + H(+) = N(6)-[(R)-S(8)-acetyldihydrolipoyl]-L-lysyl-[protein] + CO2. Functionally, the pyruvate dehydrogenase complex catalyzes the overall conversion of pyruvate to acetyl-CoA and CO(2), and thereby links the glycolytic pathway to the tricarboxylic cycle. This chain is Pyruvate dehydrogenase E1 component subunit beta, mitochondrial (Pdhb), found in Rattus norvegicus (Rat).